Here is a 145-residue protein sequence, read N- to C-terminus: Transcriptional regulator MraZ (145 aa).

SpoVT-AbrB domains lie at 7–54 (NATN…GPDL) and 83–126 (GVFM…QPQA).

The protein belongs to the MraZ family. As to quaternary structure, forms oligomers.

The protein resides in the cytoplasm. The protein localises to the nucleoid. The polypeptide is Transcriptional regulator MraZ (Rhizobium johnstonii (strain DSM 114642 / LMG 32736 / 3841) (Rhizobium leguminosarum bv. viciae)).